The sequence spans 921 residues: Eukaryotic translation initiation factor 3 subunit A (921 aa).

The region spanning 319–493 is the PCI domain; sequence FKFYASQLVL…GVVSFMEDPF (175 aa). A disordered region spans residues 497–524; sequence GGSTATNADDEQRNDDGYEETHVEEEPE. Positions 506–517 are enriched in basic and acidic residues; the sequence is DEQRNDDGYEET. Coiled-coil stretches lie at residues 562-647 and 693-868; these read ARNE…NEKT and ERMS…IKRN. Residues 818 to 865 are compositionally biased toward basic and acidic residues; sequence AAKEHDDRQRMLQDRLTKERKERERVNKEKDEAARKQREIEEAVERTI. The segment at 818–921 is disordered; the sequence is AAKEHDDRQR…KMKLRRAGRA (104 aa). The span at 873–890 shows a compositional bias: pro residues; sequence PAPPVRSAPPARAAPPPR. The segment covering 903–913 has biased composition (basic and acidic residues); sequence PEKKLTYAEKM.

The protein belongs to the eIF-3 subunit A family. As to quaternary structure, component of the eukaryotic translation initiation factor 3 (eIF-3) complex.

The protein localises to the cytoplasm. In terms of biological role, RNA-binding component of the eukaryotic translation initiation factor 3 (eIF-3) complex, which is involved in protein synthesis of a specialized repertoire of mRNAs and, together with other initiation factors, stimulates binding of mRNA and methionyl-tRNAi to the 40S ribosome. The eIF-3 complex specifically targets and initiates translation of a subset of mRNAs involved in cell proliferation. This chain is Eukaryotic translation initiation factor 3 subunit A, found in Eremothecium gossypii (strain ATCC 10895 / CBS 109.51 / FGSC 9923 / NRRL Y-1056) (Yeast).